The sequence spans 194 residues: Fatty acid metabolism regulator protein (194 aa).

The HTH tetR-type domain maps to 5 to 65; sequence RPKYMQIIDA…SLFKEKMGQF (61 aa). Residues 28–47 constitute a DNA-binding region (H-T-H motif); the sequence is QVSKIAKQAGVADGTIYLYF.

In terms of assembly, homodimer. Binds to DNA.

It is found in the cytoplasm. Transcriptional regulator in fatty acid degradation. Represses transcription of genes required for fatty acid transport and beta-oxidation, including acdA, fadA, fadB, fadE, fadF, fadG, fadH, fadM, fadN, lcfA and lcfB. Binding of FadR to DNA is specifically inhibited by long chain fatty acyl-CoA compounds of 14-20 carbon atoms in length. The protein is Fatty acid metabolism regulator protein (fadR) of Bacillus subtilis (strain 168).